A 462-amino-acid chain; its full sequence is Nuclear distribution protein PAC1 (462 aa).

The 33-residue stretch at 9 to 41 folds into the LisH domain; sequence QAEELHKAIIAYLGVINAPKTAAAFREEVNFSA. Residues 60–87 adopt a coiled-coil conformation; that stretch reads TSVVRLQKKVLELEQRNQSLQSELDSTT. The segment covering 78–99 has biased composition (polar residues); that stretch reads SLQSELDSTTPTSLLRRNQDPS. Positions 78 to 103 are disordered; the sequence is SLQSELDSTTPTSLLRRNQDPSSWLP. WD repeat units follow at residues 113-154, 156-196, 200-247, 250-289, 292-352, 354-393, 398-445, and 447-462; these read SHRS…RTVK, HTKG…KNIR, GHDH…CVKT, GHAD…AKCT, GHEH…IKTL, GHDN…RCVK, AHSH…AGIR, and VIAT…IFAS. A disordered region spans residues 414 to 434; it reads KDAPTNGDAPNGTTANGASKK.

This sequence belongs to the WD repeat LIS1/nudF family. In terms of assembly, self-associates. Interacts with NDL1 and dynein.

The protein resides in the cytoplasm. It localises to the cytoskeleton. Its subcellular location is the spindle pole. In terms of biological role, positively regulates the activity of the minus-end directed microtubule motor protein dynein. May enhance dynein-mediated microtubule sliding by targeting dynein to the microtubule plus end. Required for nuclear migration during vegetative growth as well as development. Required for retrograde early endosome (EE) transport from the hyphal tip. Required for localization of dynein to the mitotic spindle poles. Recruits additional proteins to the dynein complex at SPBs. This Phaeosphaeria nodorum (strain SN15 / ATCC MYA-4574 / FGSC 10173) (Glume blotch fungus) protein is Nuclear distribution protein PAC1.